The sequence spans 352 residues: Phosphate acetyltransferase (352 aa).

Belongs to the phosphate acetyltransferase and butyryltransferase family.

Its subcellular location is the cytoplasm. The enzyme catalyses acetyl-CoA + phosphate = acetyl phosphate + CoA. The protein operates within metabolic intermediate biosynthesis; acetyl-CoA biosynthesis; acetyl-CoA from acetate: step 2/2. The chain is Phosphate acetyltransferase (pta) from Borreliella burgdorferi (strain ATCC 35210 / DSM 4680 / CIP 102532 / B31) (Borrelia burgdorferi).